We begin with the raw amino-acid sequence, 437 residues long: Glutamate-1-semialdehyde 2,1-aminomutase (437 aa).

Lysine 272 bears the N6-(pyridoxal phosphate)lysine mark.

Belongs to the class-III pyridoxal-phosphate-dependent aminotransferase family. HemL subfamily. As to quaternary structure, homodimer. It depends on pyridoxal 5'-phosphate as a cofactor.

The protein resides in the cytoplasm. The enzyme catalyses (S)-4-amino-5-oxopentanoate = 5-aminolevulinate. It functions in the pathway porphyrin-containing compound metabolism; protoporphyrin-IX biosynthesis; 5-aminolevulinate from L-glutamyl-tRNA(Glu): step 2/2. This chain is Glutamate-1-semialdehyde 2,1-aminomutase, found in Moorella thermoacetica (strain ATCC 39073 / JCM 9320).